The chain runs to 249 residues: Polyhedrin (249 aa).

This sequence belongs to the polyhedrin family.

Its function is as follows. Major component of the virus occlusion bodies, which are large proteinaceous structures (polyhedra), that protect the virus from the outside environment for extended periods until they are ingested by insect larvae. In Lepidoptera (butterflies and moths), this protein is Polyhedrin (PH).